A 380-amino-acid chain; its full sequence is Cytochrome b (380 aa).

4 helical membrane-spanning segments follow: residues Phe-34 to Met-54, Trp-78 to Ile-99, Trp-114 to Leu-134, and Phe-179 to Thr-199. Residues His-84 and His-98 each coordinate heme b. Heme b-binding residues include His-183 and His-197. His-202 contributes to the a ubiquinone binding site. A run of 4 helical transmembrane segments spans residues Leu-227 to Ser-247, Leu-289 to His-309, Leu-321 to Ser-341, and Phe-348 to Pro-368.

The protein belongs to the cytochrome b family. In terms of assembly, the cytochrome bc1 complex contains 11 subunits: 3 respiratory subunits (MT-CYB, CYC1 and UQCRFS1), 2 core proteins (UQCRC1 and UQCRC2) and 6 low-molecular weight proteins (UQCRH/QCR6, UQCRB/QCR7, UQCRQ/QCR8, UQCR10/QCR9, UQCR11/QCR10 and a cleavage product of UQCRFS1). This cytochrome bc1 complex then forms a dimer. Heme b serves as cofactor.

It is found in the mitochondrion inner membrane. Component of the ubiquinol-cytochrome c reductase complex (complex III or cytochrome b-c1 complex) that is part of the mitochondrial respiratory chain. The b-c1 complex mediates electron transfer from ubiquinol to cytochrome c. Contributes to the generation of a proton gradient across the mitochondrial membrane that is then used for ATP synthesis. This Oceanodroma melania (Black storm-petrel) protein is Cytochrome b (MT-CYB).